The chain runs to 355 residues: Protein RecA (355 aa).

65–72 is a binding site for ATP; sequence GPESSGKT.

Belongs to the RecA family.

It localises to the cytoplasm. Functionally, can catalyze the hydrolysis of ATP in the presence of single-stranded DNA, the ATP-dependent uptake of single-stranded DNA by duplex DNA, and the ATP-dependent hybridization of homologous single-stranded DNAs. It interacts with LexA causing its activation and leading to its autocatalytic cleavage. The polypeptide is Protein RecA (Pseudomonas putida (Arthrobacter siderocapsulatus)).